Consider the following 376-residue polypeptide: Proteasome-interacting protein CIC1 (376 aa).

2 disordered regions span residues 1 to 29 (MAKKSNSKKSTPVSTPSKEKKKVIEKKSS) and 356 to 376 (RSSSELEKESSESEAVKKAKS). The required for interaction with CDC4 stretch occupies residues 310–376 (ETHEDDMVTI…ESEAVKKAKS (67 aa)). Basic and acidic residues predominate over residues 357-376 (SSSELEKESSESEAVKKAKS).

In terms of assembly, interacts with CDC4, PRE4, PRE6, RPT1 and SCL1 as part of the fully assembled 26S proteasome. Interacts with pre-ribosomal particles constituent NOP7.

The protein resides in the nucleus. Its subcellular location is the nucleolus. Its function is as follows. An adapter protein that specifically links the 26S proteasome to its substrate CDC4 which is one of the substrate recognition subunits of the SCF E3 ubiquitin ligase complex. Required for turnover of cell cycle regulatory proteins CDC4 and GRR1. Required for synthesis and nuclear export of 60S ribosomal subunits. Required for vegetative growth. The chain is Proteasome-interacting protein CIC1 (CIC1) from Saccharomyces cerevisiae (strain ATCC 204508 / S288c) (Baker's yeast).